The chain runs to 98 residues: NADH-ubiquinone oxidoreductase chain 4L (98 aa).

The next 3 helical transmembrane spans lie at 1-21 (MTLI…GLLM), 29-49 (ALLC…LTIL), and 61-81 (IILL…LVMV).

This sequence belongs to the complex I subunit 4L family. In terms of assembly, core subunit of respiratory chain NADH dehydrogenase (Complex I) which is composed of 45 different subunits.

The protein resides in the mitochondrion inner membrane. It catalyses the reaction a ubiquinone + NADH + 5 H(+)(in) = a ubiquinol + NAD(+) + 4 H(+)(out). Its function is as follows. Core subunit of the mitochondrial membrane respiratory chain NADH dehydrogenase (Complex I) which catalyzes electron transfer from NADH through the respiratory chain, using ubiquinone as an electron acceptor. Part of the enzyme membrane arm which is embedded in the lipid bilayer and involved in proton translocation. The sequence is that of NADH-ubiquinone oxidoreductase chain 4L (MT-ND4L) from Balaenoptera omurai (Omura's baleen whale).